The primary structure comprises 190 residues: Xanthine phosphoribosyltransferase 1 (190 aa).

Positions 20 and 27 each coordinate xanthine. 129–133 (AQGCA) is a 5-phospho-alpha-D-ribose 1-diphosphate binding site. Residue Lys157 participates in xanthine binding.

This sequence belongs to the purine/pyrimidine phosphoribosyltransferase family. Xpt subfamily. Homodimer.

Its subcellular location is the cytoplasm. The enzyme catalyses XMP + diphosphate = xanthine + 5-phospho-alpha-D-ribose 1-diphosphate. It functions in the pathway purine metabolism; XMP biosynthesis via salvage pathway; XMP from xanthine: step 1/1. Functionally, converts the preformed base xanthine, a product of nucleic acid breakdown, to xanthosine 5'-monophosphate (XMP), so it can be reused for RNA or DNA synthesis. The sequence is that of Xanthine phosphoribosyltransferase 1 from Clostridium perfringens (strain ATCC 13124 / DSM 756 / JCM 1290 / NCIMB 6125 / NCTC 8237 / Type A).